The following is a 273-amino-acid chain: Nickel permease LarQ (273 aa).

Transmembrane regions (helical) follow at residues 64 to 84, 117 to 137, 159 to 179, 210 to 230, and 251 to 271; these read LIQLLLLVILIALSNNLILLW, MLFVLPSYWLAGPTTLLFFGL, LAGLKALHCPDLLIMTLAIAI, LIGALFGNLYLKSYTYALELY, and HWRDYLALSPAIIVWILFIFW.

It belongs to the CbiQ family. In terms of assembly, may form an energy-coupling factor (ECF) transporter complex composed of an ATP-binding protein (A component, LarO), a transmembrane protein (T component, LarQ) and a fused possible substrate-capture protein (S component, LarMN) of unknown stoichiometry.

The protein resides in the cell membrane. In terms of biological role, probable transmembrane component of the energy-coupling factor (ECF) transporter complex LarMNQO involved in nickel import. The polypeptide is Nickel permease LarQ (Lactiplantibacillus plantarum (strain ATCC BAA-793 / NCIMB 8826 / WCFS1) (Lactobacillus plantarum)).